The sequence spans 515 residues: ATP synthase subunit alpha (515 aa).

ATP is bound at residue 171-178; sequence GDRQTGKT.

The protein belongs to the ATPase alpha/beta chains family. F-type ATPases have 2 components, CF(1) - the catalytic core - and CF(0) - the membrane proton channel. CF(1) has five subunits: alpha(3), beta(3), gamma(1), delta(1), epsilon(1). CF(0) has three main subunits: a(1), b(2) and c(9-12). The alpha and beta chains form an alternating ring which encloses part of the gamma chain. CF(1) is attached to CF(0) by a central stalk formed by the gamma and epsilon chains, while a peripheral stalk is formed by the delta and b chains.

It localises to the cell inner membrane. The enzyme catalyses ATP + H2O + 4 H(+)(in) = ADP + phosphate + 5 H(+)(out). In terms of biological role, produces ATP from ADP in the presence of a proton gradient across the membrane. The alpha chain is a regulatory subunit. The polypeptide is ATP synthase subunit alpha (Xylella fastidiosa (strain Temecula1 / ATCC 700964)).